We begin with the raw amino-acid sequence, 436 residues long: MPFGCLKPGEKKDYNSPTEITDKYDLGQIVKSEEFCEIFRAKDKNTLKMYTCKKFLKKDGRKVRKAAKNEIVILKMVKHPNILQLVDVYETRKEYYLFLELATGREVFDWILDQGYYSERDTSNVIRQVMEAVAYLHSLKIVHRNLKLENLVYYNRLKHSKIVISDFHLAKLENGLIKEPCGTPEYLAPEVVGRQRYGRPVDCWALGVIMYILLSGNPPFYDEADDDDYENHDKNLFRKILAGDYEFDSPYWDEISDSAKNLVSRLMEVDQDQRLTAQEAINHEWISGNAASDKNIKENVCAQIEKNFAKAKWKKAVRVTTMMKRLRAPENQTAAATAPAAEAAAASPSEADPAAGAQETPQAASEASTAPSSTAESLSASIEVPAVEPANAEAASAAVQPPAEPVVHVPEPEQPVPTSRCNGEASALDTVEEQSG.

The Protein kinase domain maps to 24–286 (YDLGQIVKSE…AQEAINHEWI (263 aa)). The tract at residues 328–436 (APENQTAAAT…ALDTVEEQSG (109 aa)) is disordered. Positions 333-409 (TAAATAPAAE…QPPAEPVVHV (77 aa)) are enriched in low complexity.

This sequence belongs to the protein kinase superfamily. CAMK Ser/Thr protein kinase family. Interacts with calmodulin, in the presence of calcium. It depends on Ca(2+) as a cofactor.

Its subcellular location is the cytoplasmic vesicle membrane. In terms of biological role, does not appear to have detectable kinase activity. This chain is CaM kinase-like vesicle-associated protein (camkv), found in Danio rerio (Zebrafish).